The following is a 181-amino-acid chain: uncharacterized protein (181 aa).

2 helical membrane-spanning segments follow: residues 24–46 and 55–77; these read IAAV…LLNV and GIVA…YILL.

The protein localises to the cell membrane. This is an uncharacterized protein from Archaeoglobus fulgidus (strain ATCC 49558 / DSM 4304 / JCM 9628 / NBRC 100126 / VC-16).